We begin with the raw amino-acid sequence, 497 residues long: Protein nucleotidyltransferase YdiU (497 aa).

Residues Gly-88, Gly-90, Arg-91, Lys-110, Asp-122, Gly-123, Arg-173, and Arg-180 each coordinate ATP. Asp-249 (proton acceptor) is an active-site residue. 2 residues coordinate Mg(2+): Asn-250 and Asp-259. Residue Asp-259 coordinates ATP.

Belongs to the SELO family. It depends on Mg(2+) as a cofactor. Mn(2+) serves as cofactor.

It carries out the reaction L-seryl-[protein] + ATP = 3-O-(5'-adenylyl)-L-seryl-[protein] + diphosphate. It catalyses the reaction L-threonyl-[protein] + ATP = 3-O-(5'-adenylyl)-L-threonyl-[protein] + diphosphate. The catalysed reaction is L-tyrosyl-[protein] + ATP = O-(5'-adenylyl)-L-tyrosyl-[protein] + diphosphate. The enzyme catalyses L-histidyl-[protein] + UTP = N(tele)-(5'-uridylyl)-L-histidyl-[protein] + diphosphate. It carries out the reaction L-seryl-[protein] + UTP = O-(5'-uridylyl)-L-seryl-[protein] + diphosphate. It catalyses the reaction L-tyrosyl-[protein] + UTP = O-(5'-uridylyl)-L-tyrosyl-[protein] + diphosphate. Its function is as follows. Nucleotidyltransferase involved in the post-translational modification of proteins. It can catalyze the addition of adenosine monophosphate (AMP) or uridine monophosphate (UMP) to a protein, resulting in modifications known as AMPylation and UMPylation. The polypeptide is Protein nucleotidyltransferase YdiU (Methylorubrum extorquens (strain CM4 / NCIMB 13688) (Methylobacterium extorquens)).